Reading from the N-terminus, the 487-residue chain is Glutamyl-tRNA(Gln) amidotransferase subunit A (487 aa).

Catalysis depends on charge relay system residues K75 and S150. S174 (acyl-ester intermediate) is an active-site residue.

Belongs to the amidase family. GatA subfamily. In terms of assembly, heterotrimer of A, B and C subunits.

It catalyses the reaction L-glutamyl-tRNA(Gln) + L-glutamine + ATP + H2O = L-glutaminyl-tRNA(Gln) + L-glutamate + ADP + phosphate + H(+). In terms of biological role, allows the formation of correctly charged Gln-tRNA(Gln) through the transamidation of misacylated Glu-tRNA(Gln) in organisms which lack glutaminyl-tRNA synthetase. The reaction takes place in the presence of glutamine and ATP through an activated gamma-phospho-Glu-tRNA(Gln). The polypeptide is Glutamyl-tRNA(Gln) amidotransferase subunit A (Deinococcus deserti (strain DSM 17065 / CIP 109153 / LMG 22923 / VCD115)).